A 196-amino-acid polypeptide reads, in one-letter code: Chaperone protein TorD (196 aa).

It belongs to the TorD/DmsD family. TorD subfamily.

The protein resides in the cytoplasm. Involved in the biogenesis of TorA. Acts on TorA before the insertion of the molybdenum cofactor and, as a result, probably favors a conformation of the apoenzyme that is competent for acquiring the cofactor. This is Chaperone protein TorD from Pasteurella multocida (strain Pm70).